We begin with the raw amino-acid sequence, 386 residues long: Transcription factor GTE1 (386 aa).

Disordered stretches follow at residues 66-106 (GAAQ…KHVS) and 340-386 (ANKS…AKKA). The span at 68–78 (AQTNTSKSNSG) shows a compositional bias: polar residues. Residues 105 to 211 (VSSPDLMRQF…EKFEEKWLLI (107 aa)) form the Bromo domain. The NET domain maps to 263-344 (RESVVQRCRK…EALKAANKSS (82 aa)). Positions 345–358 (GGTNAQNNNNTGTG) are enriched in low complexity.

Barely detectable in stems, leaves, siliques, and dry seeds, but was present at considerable levels in roots, flowers and imbibited seeds.

Its subcellular location is the nucleus. Functionally, transcription activator that plays a role in the promotion of seed germination by both negatively and positively regulating the abscisic acid (ABA) and phytochrome A (phyA) transduction pathways, respectively. This Arabidopsis thaliana (Mouse-ear cress) protein is Transcription factor GTE1 (GTE1).